The following is a 119-amino-acid chain: Phosphoribosyl-AMP cyclohydrolase (119 aa).

A Mg(2+)-binding site is contributed by D71. Residue C72 participates in Zn(2+) binding. Positions 73 and 75 each coordinate Mg(2+). The Zn(2+) site is built by C90 and C97.

The protein belongs to the PRA-CH family. Homodimer. The cofactor is Mg(2+). Requires Zn(2+) as cofactor.

The protein localises to the cytoplasm. It carries out the reaction 1-(5-phospho-beta-D-ribosyl)-5'-AMP + H2O = 1-(5-phospho-beta-D-ribosyl)-5-[(5-phospho-beta-D-ribosylamino)methylideneamino]imidazole-4-carboxamide. It functions in the pathway amino-acid biosynthesis; L-histidine biosynthesis; L-histidine from 5-phospho-alpha-D-ribose 1-diphosphate: step 3/9. Its function is as follows. Catalyzes the hydrolysis of the adenine ring of phosphoribosyl-AMP. The chain is Phosphoribosyl-AMP cyclohydrolase from Brucella abortus (strain 2308).